Consider the following 258-residue polypeptide: Acetylglutamate kinase (258 aa).

Substrate is bound by residues 40 to 41, Arg-62, and Asn-158; that span reads GG.

This sequence belongs to the acetylglutamate kinase family. ArgB subfamily.

The protein resides in the cytoplasm. The enzyme catalyses N-acetyl-L-glutamate + ATP = N-acetyl-L-glutamyl 5-phosphate + ADP. It participates in amino-acid biosynthesis; L-arginine biosynthesis; N(2)-acetyl-L-ornithine from L-glutamate: step 2/4. In terms of biological role, catalyzes the ATP-dependent phosphorylation of N-acetyl-L-glutamate. In Azobacteroides pseudotrichonymphae genomovar. CFP2, this protein is Acetylglutamate kinase.